Here is a 71-residue protein sequence, read N- to C-terminus: Cytotoxic linear peptide IsCT2 (71 aa).

The signal sequence occupies residues 1–23 (MKTQFAILLVALVLFQMFAQSEA). Phenylalanine amide is present on F36. A propeptide spanning residues 40-71 (ALNNDLDLDGLDELFDGEISQADVDFLKELMR) is cleaved from the precursor.

This sequence belongs to the non-disulfide-bridged peptide (NDBP) superfamily. Short antimicrobial peptide (group 4) family. In terms of processing, isCT2F is an enzymatic proteolytic cleavage product of IsCT2 by the proteases present in the venom. In terms of tissue distribution, expressed by the venom gland.

Its subcellular location is the secreted. The protein localises to the target cell membrane. Its function is as follows. IsCT2 shows weak hemolytic activity and antibacterial activity against both Gram-positive and Gram-negative bacteria probably by forming pores in the cell membrane. IsCT2 adopts an amphipathic alpha-helical structure. In terms of biological role, isCT2f shows neither hemolytic, nor antibacterial activities, surely due to the fact that it cannot apply amphipathic alpha-helical structure. The sequence is that of Cytotoxic linear peptide IsCT2 from Opisthacanthus madagascariensis (Scorpion).